The following is a 268-amino-acid chain: MKAFWRNAALLAVSLLPFSSANALALQAKQYGDFDRYVLALSWQTGFCQSQHDRNRNERDECRLQTETTNKADFLTVHGLWPGLPKSVAARGVDERRWMRFGCATRPIPNLPEARASRMCSSPETGLSLETAAKLSEVMPGAGGRSCLERYEYAKHGACFGFDPDAYFGTMVRLNQEIKESEAGKFLADNYGKTVSRRDFDAAFAKSWGKENVKAVKLTCQGNPAYLTEIQISIKADAINAPLSANSFLPQPHPGNCGKTFVIDKAGY.

Positions 1 to 23 are cleaved as a signal peptide; sequence MKAFWRNAALLAVSLLPFSSANA. Active-site residues include H78, E152, and H156. A disulfide bridge links C103 with C159.

Belongs to the RNase T2 family. In terms of assembly, monomer. Contains four disulfide bonds.

The protein localises to the periplasm. It localises to the cytoplasm. The catalysed reaction is RNA containing adenosine-cytidine + H2O = an [RNA fragment]-3'-cytidine-3'-phosphate + a 5'-a hydroxy-adenosine -3'-[RNA fragment].. Functionally, one of the few RNases that cleaves the phosphodiester bond between any two nucleotide. Shows a preference for cytidylic or guanylic acid. The protein is Ribonuclease I (rna) of Escherichia coli (strain K12).